Consider the following 132-residue polypeptide: Fatty acid-binding protein, brain (132 aa).

Val2 carries the post-translational modification N-acetylvaline. 127-129 lines the a fatty acid pocket; it reads RHY.

The protein belongs to the calycin superfamily. Fatty-acid binding protein (FABP) family. Monomer.

It is found in the cytoplasm. Functionally, FABPs are thought to play a role in the intracellular transport of long-chain fatty acids and their acyl-CoA esters. Binds oleic and palmitic acids but not palmitoyl CoA. The polypeptide is Fatty acid-binding protein, brain (FABP7) (Bos taurus (Bovine)).